The chain runs to 698 residues: Probable Xaa-Pro aminopeptidase P (698 aa).

Residues Asp509, Asp520, Glu604, and Glu618 each coordinate Mn(2+).

This sequence belongs to the peptidase M24B family. It depends on Mn(2+) as a cofactor.

The enzyme catalyses Release of any N-terminal amino acid, including proline, that is linked to proline, even from a dipeptide or tripeptide.. Catalyzes the removal of a penultimate prolyl residue from the N-termini of peptides. This is Probable Xaa-Pro aminopeptidase P (AMPP) from Trichophyton verrucosum (strain HKI 0517).